Here is a 271-residue protein sequence, read N- to C-terminus: Large ribosomal subunit protein uL18 (271 aa).

The span at 245–264 (IRENPCPPKKERTKPADAKR) shows a compositional bias: basic and acidic residues. Positions 245 to 271 (IRENPCPPKKERTKPADAKRWSPQAHL) are disordered.

It belongs to the universal ribosomal protein uL18 family. As to quaternary structure, component of the large ribosomal subunit (LSU).

The protein resides in the cytoplasm. It localises to the nucleus. Component of the ribosome, a large ribonucleoprotein complex responsible for the synthesis of proteins in the cell. The small ribosomal subunit (SSU) binds messenger RNAs (mRNAs) and translates the encoded message by selecting cognate aminoacyl-transfer RNA (tRNA) molecules. The large subunit (LSU) contains the ribosomal catalytic site termed the peptidyl transferase center (PTC), which catalyzes the formation of peptide bonds, thereby polymerizing the amino acids delivered by tRNAs into a polypeptide chain. The nascent polypeptides leave the ribosome through a tunnel in the LSU and interact with protein factors that function in enzymatic processing, targeting, and the membrane insertion of nascent chains at the exit of the ribosomal tunnel. This is Large ribosomal subunit protein uL18 (RPL5) from Dunaliella salina (Green alga).